The following is a 315-amino-acid chain: NADH-ubiquinone oxidoreductase chain 1 (315 aa).

A run of 8 helical transmembrane segments spans residues 6–26 (FILS…SVAF), 80–100 (ISPI…PFFV), 107–127 (LGGL…MIAG), 153–173 (LALI…MYFF), 177–197 (IYIW…TISL), 229–249 (LIFM…CVIF), 253–273 (DVFN…FIWA), and 292–312 (CFLS…ILLF).

Belongs to the complex I subunit 1 family.

It localises to the mitochondrion inner membrane. The catalysed reaction is a ubiquinone + NADH + 5 H(+)(in) = a ubiquinol + NAD(+) + 4 H(+)(out). Functionally, core subunit of the mitochondrial membrane respiratory chain NADH dehydrogenase (Complex I) that is believed to belong to the minimal assembly required for catalysis. Complex I functions in the transfer of electrons from NADH to the respiratory chain. The immediate electron acceptor for the enzyme is believed to be ubiquinone. This chain is NADH-ubiquinone oxidoreductase chain 1 (mt:ND1), found in Drosophila persimilis (Fruit fly).